We begin with the raw amino-acid sequence, 1409 residues long: DNA-directed RNA polymerase subunit beta' (1409 aa).

Zn(2+)-binding residues include Cys-69, Cys-71, Cys-84, and Cys-87. Residues Asp-461, Asp-463, and Asp-465 each coordinate Mg(2+). Residues Cys-805, Cys-879, Cys-886, and Cys-889 each contribute to the Zn(2+) site.

The protein belongs to the RNA polymerase beta' chain family. In terms of assembly, the RNAP catalytic core consists of 2 alpha, 1 beta, 1 beta' and 1 omega subunit. When a sigma factor is associated with the core the holoenzyme is formed, which can initiate transcription. Mg(2+) serves as cofactor. Requires Zn(2+) as cofactor.

It catalyses the reaction RNA(n) + a ribonucleoside 5'-triphosphate = RNA(n+1) + diphosphate. In terms of biological role, DNA-dependent RNA polymerase catalyzes the transcription of DNA into RNA using the four ribonucleoside triphosphates as substrates. This Anaplasma phagocytophilum (strain HZ) protein is DNA-directed RNA polymerase subunit beta'.